The chain runs to 1252 residues: Nephrin (1252 aa).

Positions 1–35 (MGAKRVTVRGARTSPIHRMSSLTPLLLMGMLTSGL) are cleaved as a signal peptide. At 36-1078 (AESPVPTSAP…PGPPRLPLLP (1043 aa)) the chain is on the extracellular side. Ig-like C2-type domains lie at 39-144 (PVPT…VILS), 149-247 (PKVL…ASFT), 256-347 (PPVI…RSIT), 354-448 (PSAI…KSLT), 454-554 (PAQK…TQLV), and 558-649 (PPTN…ETVS). N-linked (GlcNAc...) asparagine glycosylation occurs at Asn-54. 3 cysteine pairs are disulfide-bonded: Cys-67-Cys-125, Cys-174-Cys-231, and Cys-279-Cys-331. The N-linked (GlcNAc...) asparagine glycan is linked to Asn-370. Cys-375 and Cys-431 form a disulfide bridge. Position 446 is a phosphoserine (Ser-446). Cys-479 and Cys-542 are disulfide-bonded. N-linked (GlcNAc...) asparagine glycosylation is found at Asn-561, Asn-578, Asn-591, and Asn-722. Cys-581 and Cys-637 form a disulfide bridge. 2 consecutive Ig-like C2-type domains span residues 754-846 (PTIR…LVRL) and 852-953 (PQVD…VSIS). Disulfide bonds link Cys-775–Cys-830 and Cys-877–Cys-934. The Fibronectin type-III domain occupies 957 to 1052 (PPLGLKVVSI…IQVSVTTPGP (96 aa)). Residues 1043 to 1067 (IQVSVTTPGPDQAPEDTDHQLPTEL) form a disordered region. The helical transmembrane segment at 1079 to 1099 (VLFAVGGLLLLSNASCVGGLL) threads the bilayer. Residues 1100-1252 (WRRRLRRLAE…LPFELRGHLV (153 aa)) are Cytoplasmic-facing. A Phosphoserine modification is found at Ser-1112. Basic and acidic residues predominate over residues 1113–1127 (EKTEAGSEDRIRNEY). The disordered stretch occupies residues 1113–1144 (EKTEAGSEDRIRNEYEESQWTGDRDTRSSTVS). Thr-1115 carries the phosphothreonine modification. Ser-1119 bears the Phosphoserine mark. Position 1204 is a phosphotyrosine; by FYN (Tyr-1204).

This sequence belongs to the immunoglobulin superfamily. As to quaternary structure, interacts with NPHS2 and with CD2AP (via C-terminal domain). Self-associates (via the Ig-like domains). Also interacts (via the Ig-like domains) with KIRREL1/NEPH1 and KIRREL2; the interaction with KIRREL1 is dependent on KIRREL1 glycosylation. Interacts with KIRREL3. Interacts with MAGI1 (via PDZ 2 and 3 domains) forming a tripartite complex with IGSF5/JAM4. Interacts with DDN; the interaction is direct. Forms a complex with ACTN4, CASK, IQGAP1, MAGI2, SPTAN1 and SPTBN1. Interacts with phosphatidylinositol 3-kinase regulatory subunit PIK3R1; the interaction is reduced by high glucose levels. In terms of processing, phosphorylated at Tyr-1204 by FYN, leading to the recruitment and activation of phospholipase C-gamma-1/PLCG1. Tyrosine phosphorylation is reduced by high glucose levels. Dephosphorylated by tensin TNS2 which leads to reduced binding of NPHN1 to PIK3R1. In terms of tissue distribution, strongly expressed in the podocytes of kidney glomeruli (at protein level) and at lower levels in the spleen.

It is found in the cell membrane. Seems to play a role in the development or function of the kidney glomerular filtration barrier. Regulates glomerular vascular permeability. May anchor the podocyte slit diaphragm to the actin cytoskeleton. Plays a role in skeletal muscle formation through regulation of myoblast fusion. The protein is Nephrin (Nphs1) of Rattus norvegicus (Rat).